The chain runs to 685 residues: Keratin, type II cytoskeletal 2 epidermal (685 aa).

Residues Met1–Gly20 are disordered. The segment at Met1–Gln196 is head. An Asymmetric dimethylarginine modification is found at Arg22. Phosphoserine occurs at positions 25 and 28. Arg52 is subject to Omega-N-methylarginine. Ser64 bears the Phosphoserine mark. The tract at residues Glu197 to Leu232 is coil 1A. Residues Glu197–Met511 enclose the IF rod domain. The interval Gln233–Tyr251 is linker 1. Positions Ile252 to Leu343 are coil 1B. Residues Gln344–Ile367 are linker 12. The tract at residues Ile368 to Glu507 is coil 2. Positions Glu508–Arg685 are tail. A disordered region spans residues Val532 to Arg685. A compositionally biased stretch (gly residues) spans Phe538–Ser678. Arg554, Arg588, Arg603, and Arg653 each carry omega-N-methylarginine.

Belongs to the intermediate filament family. Heterotetramer of two type I and two type II keratins. Associates with KRT10.

The protein localises to the cytoplasm. Functionally, probably contributes to terminal cornification. Associated with keratinocyte activation, proliferation and keratinization. Required for maintenance of corneocytes and keratin filaments in suprabasal keratinocytes in the epidermis of the ear, potentially via moderation of expression and localization of keratins and their partner proteins. Plays a role in the establishment of the epidermal barrier on plantar skin. The chain is Keratin, type II cytoskeletal 2 epidermal from Rattus norvegicus (Rat).